A 218-amino-acid chain; its full sequence is Adenylate kinase (218 aa).

10-15 (GAGKGT) provides a ligand contact to ATP. The NMP stretch occupies residues 30–59 (STGDMLRAAVKEETPLGRKAKEVMDSGNLV). AMP is bound by residues Thr31, Arg36, 57–59 (NLV), 85–88 (GFPR), and Gln92. Residues 122 to 159 (GRRVHPASGRTYHLTFNPPQQQGVDDETGEPLIQRVDD) form an LID region. ATP is bound by residues Arg123 and 132–133 (TY). Positions 156 and 167 each coordinate AMP. ATP is bound at residue Gly203.

The protein belongs to the adenylate kinase family. In terms of assembly, monomer.

It localises to the cytoplasm. It catalyses the reaction AMP + ATP = 2 ADP. The protein operates within purine metabolism; AMP biosynthesis via salvage pathway; AMP from ADP: step 1/1. Functionally, catalyzes the reversible transfer of the terminal phosphate group between ATP and AMP. Plays an important role in cellular energy homeostasis and in adenine nucleotide metabolism. This chain is Adenylate kinase, found in Chlorobium phaeovibrioides (strain DSM 265 / 1930) (Prosthecochloris vibrioformis (strain DSM 265)).